The sequence spans 413 residues: Divalent metal cation transporter MntH (413 aa).

The Cytoplasmic portion of the chain corresponds to 1–19 (MTDNRVENSSGRAARKLRL). The chain crosses the membrane as a helical span at residues 20-39 (ALMGPAFIAAIGYIDPGNFA). Over 40–51 (TNIQAGASFGYQ) the chain is Periplasmic. A helical transmembrane segment spans residues 52 to 71 (LLWVVVWANLMAMLIQILSA). Over 72–95 (KLGIATGKNLAEQIRDHYPRPVVW) the chain is Cytoplasmic. A helical membrane pass occupies residues 96–118 (FYWVQAEIIAMATDLAEFIGAAI). Topologically, residues 119–125 (GFKLILG) are periplasmic. The chain crosses the membrane as a helical span at residues 126–145 (VSLLQGAVLTGIATFLILML). The Cytoplasmic segment spans residues 146–155 (QRRGQKPLEK). A helical transmembrane segment spans residues 156–175 (VIGGLLLFVAAAYIVELFFS). The Periplasmic segment spans residues 176–196 (QPDMAQLGKGMVIPALPNPEA). A helical transmembrane segment spans residues 197–220 (VFLAAGVLGATIMPHVIYLHSSLT). The Cytoplasmic segment spans residues 221-238 (QHLHGGTRQQRYSATKWD). Residues 239-258 (VAIAMTIAGFVNLAMMATAA) form a helical membrane-spanning segment. Over 259–276 (AAFHFSGHTGIADLDQAY) the chain is Periplasmic. A helical transmembrane segment spans residues 277–297 (LTLEPLLSHAAATVFGLSLVA). Residues 298–327 (AGLSSTVVGTLAGQVVMQGFVRFHIPLWVR) lie on the Cytoplasmic side of the membrane. The chain crosses the membrane as a helical span at residues 328–344 (RSITMLPSFIVILMGLD). The Periplasmic segment spans residues 345-350 (PTRILV). Residues 351-370 (MSQVLLSFGIALALVPLLIF) form a helical membrane-spanning segment. The Cytoplasmic portion of the chain corresponds to 371-387 (TSNATLMGELVNTRRVK). A helical transmembrane segment spans residues 388–406 (QIGWIIVVLVVALNIWLLV). Topologically, residues 407 to 413 (GTVMGLS) are periplasmic.

The protein belongs to the NRAMP family.

The protein localises to the cell inner membrane. Its function is as follows. H(+)-stimulated, divalent metal cation uptake system. The polypeptide is Divalent metal cation transporter MntH (Salmonella gallinarum (strain 287/91 / NCTC 13346)).